Reading from the N-terminus, the 316-residue chain is Pantothenate kinase (316 aa).

95–102 (GSVAVGKS) contributes to the ATP binding site.

Belongs to the prokaryotic pantothenate kinase family.

The protein localises to the cytoplasm. It carries out the reaction (R)-pantothenate + ATP = (R)-4'-phosphopantothenate + ADP + H(+). It functions in the pathway cofactor biosynthesis; coenzyme A biosynthesis; CoA from (R)-pantothenate: step 1/5. This is Pantothenate kinase from Shigella boydii serotype 18 (strain CDC 3083-94 / BS512).